Reading from the N-terminus, the 710-residue chain is Denticleless protein homolog A (710 aa).

WD repeat units follow at residues 47–89, 96–135, and 138–178; these read GMPV…MQRL, AHTN…LIGE, and GHQC…KDGF. Residues 168–171 carry the DDB1-binding motif motif; sequence WDTR. The Nuclear localization signal motif lies at 197 to 204; the sequence is PSKMKKRK. 4 WD repeats span residues 215 to 254, 270 to 309, 314 to 355, and 359 to 398; these read DSQQ…SAYR, TRKL…TDPV, GHQN…AAPV, and GHCQ…CEDS. The short motif at 244-247 is the DDB1-binding motif element; that stretch reads WDLR. 2 disordered regions span residues 428–534 and 652–698; these read GKPS…VSSA and ALGH…PGSM. The segment covering 430–450 has biased composition (low complexity); that stretch reads PSVMSSSSLTSSPTPASCAPS. 2 stretches are compositionally biased toward polar residues: residues 504-516 and 659-690; these read TPKS…TKTP and SSPQ…SPVS.

It belongs to the WD repeat cdt2 family. As to quaternary structure, component of the DCX(DTL) E3 ubiquitin ligase complex, at least composed of cul4 (cul4a or cul4b), ddb1, dtl/cdt2 and rbx1.

It localises to the nucleus. The protein resides in the cytoplasm. Its subcellular location is the cytoskeleton. The protein localises to the microtubule organizing center. It is found in the centrosome. It localises to the chromosome. It participates in protein modification; protein ubiquitination. Its function is as follows. Substrate-specific adapter of a DCX (DDB1-CUL4-X-box) E3 ubiquitin-protein ligase complex required for cell cycle control, DNA damage response and translesion DNA synthesis. The DCX(DTL) complex, also named CRL4(CDT2) complex, mediates the polyubiquitination and subsequent degradation of CDT1, CDKN1A/p21(CIP1), KMT5A and SDE2. CDT1 degradation in response to DNA damage is necessary to ensure proper cell cycle regulation of DNA replication. CDKN1A/p21(CIP1) degradation during S phase or following UV irradiation is essential to control replication licensing. KMT5A degradation is also important for a proper regulation of mechanisms such as TGF-beta signaling, cell cycle progression, DNA repair and cell migration. Most substrates require their interaction with PCNA for their polyubiquitination: substrates interact with PCNA via their PIP-box, and those containing the 'K+4' motif in the PIP box, recruit the DCX(DTL) complex, leading to their degradation. In undamaged proliferating cells, the DCX(DTL) complex also promotes the 'Lys-164' monoubiquitination of PCNA, thereby being involved in PCNA-dependent translesion DNA synthesis. May play a role in the regulation of the circadian clock. The sequence is that of Denticleless protein homolog A (dtl-a) from Xenopus laevis (African clawed frog).